Consider the following 99-residue polypeptide: Large ribosomal subunit protein uL23 (99 aa).

The protein belongs to the universal ribosomal protein uL23 family. In terms of assembly, part of the 50S ribosomal subunit. Contacts protein L29, and trigger factor when it is bound to the ribosome.

Functionally, one of the early assembly proteins it binds 23S rRNA. One of the proteins that surrounds the polypeptide exit tunnel on the outside of the ribosome. Forms the main docking site for trigger factor binding to the ribosome. This is Large ribosomal subunit protein uL23 from Pseudomonas aeruginosa (strain LESB58).